The following is a 207-amino-acid chain: Thymidylate kinase (207 aa).

7–14 contacts ATP; sequence GCEGSGKS.

Belongs to the thymidylate kinase family.

The catalysed reaction is dTMP + ATP = dTDP + ADP. Its function is as follows. Phosphorylation of dTMP to form dTDP in both de novo and salvage pathways of dTTP synthesis. This Chlamydia caviae (strain ATCC VR-813 / DSM 19441 / 03DC25 / GPIC) (Chlamydophila caviae) protein is Thymidylate kinase.